The sequence spans 37 residues: Large ribosomal subunit protein bL36 (37 aa).

This sequence belongs to the bacterial ribosomal protein bL36 family.

This is Large ribosomal subunit protein bL36 (rpmJ) from Fusobacterium nucleatum subsp. nucleatum (strain ATCC 25586 / DSM 15643 / BCRC 10681 / CIP 101130 / JCM 8532 / KCTC 2640 / LMG 13131 / VPI 4355).